The sequence spans 174 residues: ATP synthase subunit delta (174 aa).

The protein belongs to the ATPase delta chain family. As to quaternary structure, F-type ATPases have 2 components, F(1) - the catalytic core - and F(0) - the membrane proton channel. F(1) has five subunits: alpha(3), beta(3), gamma(1), delta(1), epsilon(1). F(0) has three main subunits: a(1), b(2) and c(10-14). The alpha and beta chains form an alternating ring which encloses part of the gamma chain. F(1) is attached to F(0) by a central stalk formed by the gamma and epsilon chains, while a peripheral stalk is formed by the delta and b chains.

The protein localises to the cell inner membrane. Functionally, f(1)F(0) ATP synthase produces ATP from ADP in the presence of a proton or sodium gradient. F-type ATPases consist of two structural domains, F(1) containing the extramembraneous catalytic core and F(0) containing the membrane proton channel, linked together by a central stalk and a peripheral stalk. During catalysis, ATP synthesis in the catalytic domain of F(1) is coupled via a rotary mechanism of the central stalk subunits to proton translocation. This protein is part of the stalk that links CF(0) to CF(1). It either transmits conformational changes from CF(0) to CF(1) or is implicated in proton conduction. The sequence is that of ATP synthase subunit delta from Francisella tularensis subsp. tularensis (strain FSC 198).